Consider the following 993-residue polypeptide: MAVLKLCEQPPLVQAIFSGDPEEIRMLIHKTEDVNALDSEKRTPLHVAAFLGDAEIIELLILSGARVNAKDNMWLTPLHRAVASRSEEAVQVLIKHSADVNARDKNWQTPLHVAAANKAVKCAEVIIPLLSSVNVSDRGGRTALHHAALNGHMEMVNLLLAKGANINAFDKKDRRALHWAAYMGHLDVVALLINHGAEVTCKDKKGYTPLHAAASNGQISVVKHLLNLGVEIDEINVYGNTALHIACYNGQDAVVNELIDYGANVNQPNNSGFTPLHFAAASTHGALCLELLVNNGADVNIQSKDGKSPLHMTAVHGRFTRSQTLIQNGGEIDCVDKDGNTPLHVAARHGHELLINTLITSGADTAKCGIHSMFPLHLAALNAHSDCCRKLLSSGFEIDTPDTFGRTCLHAAAAGGNVECIKLLQSSGADFHKKDKCGRTPLHYAAANCHFHCIKALVTTGANVNETDDWGRTALHYAAASDMDRNKMILGNAHDNSEELERAREVKEKDAALCLEFLLQNDANPSIRDKEGYNSIHYAAAYGHRQCLELLLERTNTGFEESDGGALKSPLHLAAYNGHHQALEVLLQSLVDLDIRDEKGRTALYLAAFKGHTECVEALVNQGASIFVKDNVTKRTPLHASVINGHTLCLRLLLETADNPEVVDVKDAKGQTPLMLAVAYGHIDAVSLLLEKEANVDAVDIVGCTALHRGIMTGHEECVQMLLEQEASILCKDSRGRTPLHYAAARGHATWLNELLQIALSEEDCCLKDNQGYTPLHWACYNGNENCIEVLLEQKCFRKFIGNPFTPLHCAIINGHESCASLLLGAIDPSIVSCRDDKGRTTLHAAAFGDHAECLQLLLRHDAQVNAVDNSGKTALMMAAENGQAGAVDILVNSAQADLTVKDKDLNTPLHLAISKGHEKCALLILDKIQDESLINAKNSALQTPLHIAARNGLKVVVEELLAKGACVLAVDENASRSNGPRSPPGTAVRKEE.

28 ANK repeats span residues 7–36 (CEQPPLVQAIFSGDPEEIRMLIHKTEDVNA), 40–69 (EKRTPLHVAAFLGDAEIIELLILSGARVNA), 73–102 (MWLTPLHRAVASRSEEAVQVLIKHSADVNA), 106–135 (NWQTPLHVAAANKAVKCAEVIIPLLSSVNV), 139–168 (GGRTALHHAALNGHMEMVNLLLAKGANINA), 172–201 (KDRRALHWAAYMGHLDVVALLINHGAEVTC), 205–234 (KGYTPLHAAASNGQISVVKHLLNLGVEIDE), 238–267 (YGNTALHIACYNGQDAVVNELIDYGANVNQ), 271–301 (SGFTPLHFAAASTHGALCLELLVNNGADVNI), 305–334 (DGKSPLHMTAVHGRFTRSQTLIQNGGEIDC), 338–367 (DGNTPLHVAARHGHELLINTLITSGADTAK), 371–400 (HSMFPLHLAALNAHSDCCRKLLSSGFEIDT), 404–433 (FGRTCLHAAAAGGNVECIKLLQSSGADFHK), 437–466 (CGRTPLHYAAANCHFHCIKALVTTGANVNE), 470–498 (WGRTALHYAAASDMDRNKMILGNAHDNSE), 531–561 (EGYNSIHYAAAYGHRQCLELLLERTNTGFEE), 566–595 (ALKSPLHLAAYNGHHQALEVLLQSLVDLDI), 599–628 (KGRTALYLAAFKGHTECVEALVNQGASIFV), 633–662 (TKRTPLHASVINGHTLCLRLLLETADNPEV), 669–698 (KGQTPLMLAVAYGHIDAVSLLLEKEANVDA), 702–731 (VGCTALHRGIMTGHEECVQMLLEQEASILC), 735–764 (RGRTPLHYAAARGHATWLNELLQIALSEED), 771–800 (QGYTPLHWACYNGNENCIEVLLEQKCFRKF), 803–832 (NPFTPLHCAIINGHESCASLLLGAIDPSIV), 838–867 (KGRTTLHAAAFGDHAECLQLLLRHDAQVNA), 871–901 (SGKTALMMAAENGQAGAVDILVNSAQADLTV), 905–934 (DLNTPLHLAISKGHEKCALLILDKIQDESL), and 941–970 (ALQTPLHIAARNGLKVVVEELLAKGACVLA). Residues 974–993 (NASRSNGPRSPPGTAVRKEE) form a disordered region.

As to quaternary structure, protein phosphatase 6 (PP6) holoenzyme is proposed to be a heterotrimeric complex formed by the catalytic subunit, a SAPS domain-containing subunit (PP6R) and an ankyrin repeat-domain containing regulatory subunit (ARS). Interacts with PPP6R1.

Functionally, putative regulatory subunit of protein phosphatase 6 (PP6) that may be involved in the recognition of phosphoprotein substrates. The protein is Serine/threonine-protein phosphatase 6 regulatory ankyrin repeat subunit B (Ankrd44) of Mus musculus (Mouse).